The primary structure comprises 986 residues: Ankyrin repeat, PH and SEC7 domain containing protein secG (986 aa).

Low complexity predominate over residues 1-28; sequence MGSTSNSTKNTGSTTTTTTTAAPATTAK. The tract at residues 1–43 is disordered; that stretch reads MGSTSNSTKNTGSTTTTTTTAAPATTAKHSNSAPTRPSVHYYS. Residues 29-43 show a composition bias toward polar residues; sequence HSNSAPTRPSVHYYS. ANK repeat units lie at residues 34 to 63, 68 to 97, 101 to 131, 135 to 164, 168 to 197, 201 to 230, 234 to 263, 267 to 296, 300 to 329, 334 to 363, 367 to 396, 400 to 429, 433 to 462, 466 to 495, and 499 to 528; these read PTRP…TSPD, EKRT…NANI, AGNT…DVNT, KNGT…DPRA, NGET…KVNA, DCIT…KVDP, HGIS…NINC, EGVT…KINM, MGET…TMID, RQST…QINI, EGAT…PICI, QGAT…ELEV, QGGT…NVNA, HSST…RIDA, and AGKT…DLDQ. Residues 580–770 enclose the SEC7 domain; that stretch reads QLAAEKQKLL…ENLYDKIVTN (191 aa). Residues 784–895 enclose the PH domain; it reads HVEKKGWLTK…WVQSIKSNIH (112 aa). The disordered stretch occupies residues 911-986; the sequence is IRGRGKVSTK…PVQQQTSALS (76 aa). The segment covering 920–929 has biased composition (polar residues); the sequence is KPIQNRKQTI. 2 stretches are compositionally biased toward low complexity: residues 936 to 953 and 963 to 986; these read TTTT…SVGS and SSGS…SALS.

This Dictyostelium discoideum (Social amoeba) protein is Ankyrin repeat, PH and SEC7 domain containing protein secG (secG).